A 558-amino-acid polypeptide reads, in one-letter code: MLIDYPPTINFINFNQTGSCISIATDDGFSIYNCDPFGKFYSQKNYSIVEMLFSTSLLAVVGLGDQPALSQRRLTMINTKTYSIICEVTFPSAILSVKMNKSRLVVLLRDQIYIYDINNMRLLHTIETTSNKLGIISISSSPSPDHNMYLAYPSPPKFINSDIKSNLTTNNISIASSSSSQVEPPLNPQQRSNFSGNTLETIQDGKSYDGSNNSNNGNNNNNNNNNNNNNNNNNNNNNNNNNNSNNEENSNSKSFQQTGITGSSNSTIMKNGDVILFDLQTLQPTMVIEAHKGPIAALTLSFDGSLLATASEKGTIIRVFNVETGAKIYQFRRGTYPTEVYSLAFSKDNQFLAATSSSKTVHIFKLGKIMETSSDDNNNNTDDDSLNAGNIDSEIVTNLSSESLTESQSKDPHVDTSRSTVGRMIRKSSQQLSRQAAKKLGQIFPLKVASILESSRHFASFKLPTTGSGGGNSTGAGGQIKSISCFGEEIELDSSEYPELFNQGQDTTSNISQSKNPKLMKMQPIRIVSSDGNYYNYILDPERGGDCLLLSQYSILTN.

One copy of the WD 1 repeat lies at 4–42; that stretch reads DYPPTINFINFNQTGSCISIATDDGFSIYNCDPFGKFYS. Residues 176–264 are disordered; sequence SSSSSQVEPP…FQQTGITGSS (89 aa). Residues 188-201 show a composition bias toward polar residues; the sequence is PQQRSNFSGNTLET. A compositionally biased stretch (low complexity) spans 210–252; sequence GSNNSNNGNNNNNNNNNNNNNNNNNNNNNNNNNNSNNEENSNS. The span at 253–264 shows a compositional bias: polar residues; sequence KSFQQTGITGSS. 2 WD repeats span residues 290–330 and 335–374; these read AHKG…KIYQ and TYPT…ETSS. A L/FRRG motif motif is present at residues 331–335; it reads FRRGT. The disordered stretch occupies residues 400-432; the sequence is SSESLTESQSKDPHVDTSRSTVGRMIRKSSQQL.

It belongs to the WD repeat PROPPIN family. Component of the PI(3,5)P2 regulatory complex.

It is found in the preautophagosomal structure membrane. The protein resides in the vacuole membrane. It localises to the endosome membrane. Functionally, the PI(3,5)P2 regulatory complex regulates both the synthesis and turnover of phosphatidylinositol 3,5-bisphosphate (PtdIns(3,5)P2). Necessary for proper vacuole morphology. Plays an important role in osmotically-induced vacuole fragmentation. Required for cytoplasm to vacuole transport (Cvt) vesicle formation, pexophagy and starvation-induced autophagy. Involved in correct ATG9 trafficking to the pre-autophagosomal structure. Might also be involved in premeiotic DNA replication. The sequence is that of Autophagy-related protein 18 (ATG18) from Vanderwaltozyma polyspora (strain ATCC 22028 / DSM 70294 / BCRC 21397 / CBS 2163 / NBRC 10782 / NRRL Y-8283 / UCD 57-17) (Kluyveromyces polysporus).